The chain runs to 255 residues: Indole-3-glycerol phosphate synthase (255 aa).

It belongs to the TrpC family.

It catalyses the reaction 1-(2-carboxyphenylamino)-1-deoxy-D-ribulose 5-phosphate + H(+) = (1S,2R)-1-C-(indol-3-yl)glycerol 3-phosphate + CO2 + H2O. It functions in the pathway amino-acid biosynthesis; L-tryptophan biosynthesis; L-tryptophan from chorismate: step 4/5. In Streptococcus thermophilus (strain ATCC BAA-250 / LMG 18311), this protein is Indole-3-glycerol phosphate synthase.